The following is a 223-amino-acid chain: MGQKVNPIGLRLGINRTWDSRWFAGRDYASLLHQDLAIKKYLKSKLAQAGVSRIVIERPAKKARITIHTARPGVVIGKKGQDIENLRKKLQVMTGNEVHLNIVEIRKPELDAQLVAENIAQQLERRVAFRRAMKRAVQSAMRLGALGIRINCGGRLGGAEIARTEWYREGRVPLHTLRADVDYGTAAAHTTYGVCGVKVWVFKGEIMEHDPMAQDKRSQDQGR.

Residues 38-106 form the KH type-2 domain; sequence IKKYLKSKLA…EVHLNIVEIR (69 aa).

This sequence belongs to the universal ribosomal protein uS3 family. Part of the 30S ribosomal subunit. Forms a tight complex with proteins S10 and S14.

Its function is as follows. Binds the lower part of the 30S subunit head. Binds mRNA in the 70S ribosome, positioning it for translation. This Rhodospirillum rubrum (strain ATCC 11170 / ATH 1.1.1 / DSM 467 / LMG 4362 / NCIMB 8255 / S1) protein is Small ribosomal subunit protein uS3.